Reading from the N-terminus, the 208-residue chain is Small ribosomal subunit protein uS4 (208 aa).

One can recognise an S4 RNA-binding domain in the interval 97 to 158 (TRLDNVIYRM…RAQKYLCVQE (62 aa)).

It belongs to the universal ribosomal protein uS4 family. Part of the 30S ribosomal subunit. Contacts protein S5. The interaction surface between S4 and S5 is involved in control of translational fidelity.

One of the primary rRNA binding proteins, it binds directly to 16S rRNA where it nucleates assembly of the body of the 30S subunit. In terms of biological role, with S5 and S12 plays an important role in translational accuracy. In Xylella fastidiosa (strain 9a5c), this protein is Small ribosomal subunit protein uS4.